We begin with the raw amino-acid sequence, 169 residues long: S-ribosylhomocysteine lyase (169 aa).

3 residues coordinate Fe cation: His-54, His-58, and Cys-128.

Belongs to the LuxS family. In terms of assembly, homodimer. Fe cation is required as a cofactor.

It catalyses the reaction S-(5-deoxy-D-ribos-5-yl)-L-homocysteine = (S)-4,5-dihydroxypentane-2,3-dione + L-homocysteine. Functionally, involved in the synthesis of autoinducer 2 (AI-2) which is secreted by bacteria and is used to communicate both the cell density and the metabolic potential of the environment. The regulation of gene expression in response to changes in cell density is called quorum sensing. Catalyzes the transformation of S-ribosylhomocysteine (RHC) to homocysteine (HC) and 4,5-dihydroxy-2,3-pentadione (DPD). The sequence is that of S-ribosylhomocysteine lyase from Shewanella halifaxensis (strain HAW-EB4).